The chain runs to 199 residues: MKLVLASNNRGKLAELQSMFSPLGVELVRQADLGVGEADEPFHTFVENALAKARFAAEHTGLPALADDAGLCVDAFGGQPGVQTAYYATRFGYEKGDANNVRALLEQMRGVASRRAAMVSTLVAVRSPDDPEPLIAVGRVVGEIATEPRGDGGFGFDPVMFIPEFGKTFAELPVEVKNAHSHRGRSAQQMLALMRERWF.

Ser7–Lys12 lines the substrate pocket. Mg(2+) contacts are provided by Asp39 and Asp68. Asp68 (proton acceptor) is an active-site residue. Residues Ala69, Phe154 to Asp157, Lys177, and His182 to Arg183 contribute to the substrate site.

Belongs to the HAM1 NTPase family. Homodimer. Requires Mg(2+) as cofactor.

The enzyme catalyses XTP + H2O = XMP + diphosphate + H(+). It catalyses the reaction dITP + H2O = dIMP + diphosphate + H(+). The catalysed reaction is ITP + H2O = IMP + diphosphate + H(+). Functionally, pyrophosphatase that catalyzes the hydrolysis of nucleoside triphosphates to their monophosphate derivatives, with a high preference for the non-canonical purine nucleotides XTP (xanthosine triphosphate), dITP (deoxyinosine triphosphate) and ITP. Seems to function as a house-cleaning enzyme that removes non-canonical purine nucleotides from the nucleotide pool, thus preventing their incorporation into DNA/RNA and avoiding chromosomal lesions. This is dITP/XTP pyrophosphatase from Paracidovorax citrulli (strain AAC00-1) (Acidovorax citrulli).